The chain runs to 975 residues: P3N-PIPO polyprotein (975 aa).

A Peptidase S30 domain is found at 139–284 (LKGQHTIHYV…GRDMSTIREF (146 aa)). Active-site for P1 proteinase activity residues include H192, D201, and S232. Positions 335-338 (RITC) match the Involved in interaction with stylet and aphid transmission motif. Residues 593–595 (PTK) carry the Involved in virions binding and aphid transmission motif. The region spanning 619 to 741 (MYIAKDGFCH…ESELKYYRVG (123 aa)) is the Peptidase C6 domain. Active-site for helper component proteinase activity residues include C627 and H700.

The protein belongs to the potyviridae P3N-PIPO polyprotein family. Interacts (via PIPO domain) with host PCaP1 protein; this interaction may help to anchor the movement complex to the plasma membrane from which the complex could move to the plasmodesmata. Potyviral RNA is expressed as two polyproteins which undergo post-translational proteolytic processing. Genome polyprotein is processed by NIa-pro, P1 and HC-pro proteinases resulting in the production of at least ten individual proteins. P3N-PIPO is cleaved by P1 and HC-pro proteinases resulting in the production of three individual proteins. The P1 proteinase and the HC-pro cleave only their respective C-termini autocatalytically.

Its subcellular location is the host cell junction. The protein localises to the host plasmodesma. The catalysed reaction is Hydrolyzes a Gly-|-Gly bond at its own C-terminus, commonly in the sequence -Tyr-Xaa-Val-Gly-|-Gly, in the processing of the potyviral polyprotein.. In terms of biological role, required for aphid transmission and also has proteolytic activity. Only cleaves a Gly-Gly dipeptide at its own C-terminus. Interacts with virions and aphid stylets. Acts as a suppressor of RNA-mediated gene silencing, also known as post-transcriptional gene silencing (PTGS), a mechanism of plant viral defense that limits the accumulation of viral RNAs. May have RNA-binding activity. Its function is as follows. Allows efficient cell to cell propagation, by bypassing the host cell wall barrier. Transports viral genome to neighboring plant cells directly through plasmosdesmata, without any budding. This chain is P3N-PIPO polyprotein, found in Arachis hypogaea (Peanut).